The primary structure comprises 540 residues: Chaperonin GroEL 3 (540 aa).

ATP is bound by residues 30 to 33, Lys51, 87 to 91, Gly415, 479 to 481, and Asp495; these read TLGP, DGTTT, and NAA.

This sequence belongs to the chaperonin (HSP60) family. As to quaternary structure, forms a cylinder of 14 subunits composed of two heptameric rings stacked back-to-back. Interacts with the co-chaperonin GroES.

It localises to the cytoplasm. The enzyme catalyses ATP + H2O + a folded polypeptide = ADP + phosphate + an unfolded polypeptide.. Its function is as follows. Together with its co-chaperonin GroES, plays an essential role in assisting protein folding. The GroEL-GroES system forms a nano-cage that allows encapsulation of the non-native substrate proteins and provides a physical environment optimized to promote and accelerate protein folding. This chain is Chaperonin GroEL 3, found in Burkholderia ambifaria (strain ATCC BAA-244 / DSM 16087 / CCUG 44356 / LMG 19182 / AMMD) (Burkholderia cepacia (strain AMMD)).